The chain runs to 424 residues: Protein shisa-9 (424 aa).

Positions 1–23 are cleaved as a signal peptide; it reads MRRVLRLLLGCFLTELCARVCRA. At 24 to 149 the chain is on the extracellular side; it reads QERAGHGQLA…DPLHDPTKDK (126 aa). N-linked (GlcNAc...) asparagine glycans are attached at residues Asn45, Asn89, and Asn116. The helical transmembrane segment at 150–170 threads the bilayer; it reads TNLIVYIICGVVAVMVLVGIF. Residues 171 to 424 are Cytoplasmic-facing; that stretch reads TKLGLEKAHR…ITNSKTEVTV (254 aa). The disordered stretch occupies residues 333–424; that stretch reads PRAFSPEHGP…ITNSKTEVTV (92 aa). The segment covering 414-424 has biased composition (polar residues); it reads FITNSKTEVTV.

This sequence belongs to the shisa family. SHISA9 subfamily. Component of some AMPA receptors (ionotropic glutamate receptors) complex, at least composed of some AMPA receptor (GRIA1, GRIA2 and/or GRIA3), CACNG2 and SHISA9, as well as low level of DLG4.

It is found in the cell projection. It localises to the dendritic spine membrane. The protein localises to the synapse. In terms of biological role, regulator of short-term neuronal synaptic plasticity in the dentate gyrus. Associates with AMPA receptors (ionotropic glutamate receptors) in synaptic spines and promotes AMPA receptor desensitization at excitatory synapses. This Homo sapiens (Human) protein is Protein shisa-9 (SHISA9).